The chain runs to 378 residues: T-cell immunoglobulin and mucin domain-containing protein 4 (378 aa).

An N-terminal signal peptide occupies residues 1 to 24 (MSKEPLILWLMIEFWWLYLTPVTS). The Ig-like V-type domain maps to 25–126 (ETVVTEVLGH…PGWFNDVKIN (102 aa)). At 25 to 314 (ETVVTEVLGH…SMKNEMPISQ (290 aa)) the chain is on the extracellular side. Disulfide bonds link Cys-40–Cys-112, Cys-53–Cys-64, and Cys-59–Cys-111. Disordered regions lie at residues 136–160 (TTTH…TRQM) and 269–304 (WKTS…GIPM). A compositionally biased stretch (polar residues) spans 269–297 (WKTSDSVSSPQPGASDTAVPEQNKTTKTG). Residue Asn-291 is glycosylated (N-linked (GlcNAc...) asparagine). The chain crosses the membrane as a helical span at residues 315-335 (LLMIIAPSLGFVLFALFVAFL). Over 336-378 (LRGKLMETYCSQKHTRLDYIGDSKNVLNDVQHGREDEDGLFTL) the chain is Cytoplasmic. The residue at position 358 (Ser-358) is a Phosphoserine.

It belongs to the immunoglobulin superfamily. TIM family. As to quaternary structure, interacts with MERTK; this interaction enhances TIMD4-mediated efferocytosis. Interacts with EPHA2.

Its subcellular location is the cell membrane. It is found in the secreted. It localises to the extracellular exosome. Its function is as follows. Phosphatidylserine receptor that plays different role in immune response including phagocytosis of apoptotic cells and T-cell regulation. Controls T-cell activation in a bimodal fashion, decreasing the activation of naive T-cells by inducing cell cycle arrest, while increasing proliferation of activated T-cells by activating AKT1 and ERK1/2 phosphorylations and subsequent signaling pathways. Also plays a role in efferocytosis which is the process by which apoptotic cells are removed by phagocytic cells. Mechanistically, promotes the engulfment of apoptotic cells or exogenous particles by securing them to phagocytes through direct binding to phosphatidylserine present on apoptotic cells, while other engulfment receptors such as MERTK efficiently recognize apoptotic cells and mediate their ingestion. Additionally, promotes autophagy process by suppressing NLRP3 inflammasome activity via activation of LKB1/PRKAA1 pathway in a phosphatidylserine-dependent mechanism. (Microbial infection) Plays a positive role in exosome-mediated trafficking of HIV-1 virus and its entry into immune cells. The protein is T-cell immunoglobulin and mucin domain-containing protein 4 (TIMD4) of Homo sapiens (Human).